Reading from the N-terminus, the 235-residue chain is Hydroxyacylglutathione hydrolase (235 aa).

Residues His53, His55, Asp57, His58, His109, Asp127, and His165 each contribute to the Zn(2+) site.

Belongs to the metallo-beta-lactamase superfamily. Glyoxalase II family. As to quaternary structure, monomer. Zn(2+) serves as cofactor.

It catalyses the reaction an S-(2-hydroxyacyl)glutathione + H2O = a 2-hydroxy carboxylate + glutathione + H(+). It functions in the pathway secondary metabolite metabolism; methylglyoxal degradation; (R)-lactate from methylglyoxal: step 2/2. In terms of biological role, thiolesterase that catalyzes the hydrolysis of S-D-lactoyl-glutathione to form glutathione and D-lactic acid. The chain is Hydroxyacylglutathione hydrolase from Haemophilus ducreyi (strain 35000HP / ATCC 700724).